Reading from the N-terminus, the 325-residue chain is Thioredoxin reductase (325 aa).

Residues 10–13, 39–40, Gln-44, Asn-53, Val-86, Cys-143, Asp-286, and 293–295 contribute to the FAD site; these read SGPS, IA, and RQA. An intrachain disulfide couples Cys-140 to Cys-143.

The protein belongs to the class-II pyridine nucleotide-disulfide oxidoreductase family. As to quaternary structure, homodimer. It depends on FAD as a cofactor.

Its subcellular location is the cytoplasm. It catalyses the reaction [thioredoxin]-dithiol + NADP(+) = [thioredoxin]-disulfide + NADPH + H(+). This is Thioredoxin reductase (TRR1) from Pneumocystis carinii.